Reading from the N-terminus, the 230-residue chain is Phosphoribosylformylglycinamidine synthase subunit PurQ (230 aa).

A Glutamine amidotransferase type-1 domain is found at 3 to 230 (SAIIVFPGTN…LFQSIVESLS (228 aa)). Cys-87 acts as the Nucleophile in catalysis. Active-site residues include His-204 and Glu-206.

As to quaternary structure, part of the FGAM synthase complex composed of 1 PurL, 1 PurQ and 2 PurS subunits.

It is found in the cytoplasm. The catalysed reaction is N(2)-formyl-N(1)-(5-phospho-beta-D-ribosyl)glycinamide + L-glutamine + ATP + H2O = 2-formamido-N(1)-(5-O-phospho-beta-D-ribosyl)acetamidine + L-glutamate + ADP + phosphate + H(+). The enzyme catalyses L-glutamine + H2O = L-glutamate + NH4(+). It functions in the pathway purine metabolism; IMP biosynthesis via de novo pathway; 5-amino-1-(5-phospho-D-ribosyl)imidazole from N(2)-formyl-N(1)-(5-phospho-D-ribosyl)glycinamide: step 1/2. Functionally, part of the phosphoribosylformylglycinamidine synthase complex involved in the purines biosynthetic pathway. Catalyzes the ATP-dependent conversion of formylglycinamide ribonucleotide (FGAR) and glutamine to yield formylglycinamidine ribonucleotide (FGAM) and glutamate. The FGAM synthase complex is composed of three subunits. PurQ produces an ammonia molecule by converting glutamine to glutamate. PurL transfers the ammonia molecule to FGAR to form FGAM in an ATP-dependent manner. PurS interacts with PurQ and PurL and is thought to assist in the transfer of the ammonia molecule from PurQ to PurL. In Rhodospirillum rubrum (strain ATCC 11170 / ATH 1.1.1 / DSM 467 / LMG 4362 / NCIMB 8255 / S1), this protein is Phosphoribosylformylglycinamidine synthase subunit PurQ.